Here is a 271-residue protein sequence, read N- to C-terminus: Cyclic AMP-dependent transcription factor ATF-1 (271 aa).

The segment at 1 to 61 (MEDSHKSTTS…QKAHGILARR (61 aa)) is disordered. The region spanning 31–90 (QVSSLSESEESQDSSDSIGSSQKAHGILARRPSYRKILKDLSSEDTRGRKGDGENSGVSA) is the KID domain. Position 63 is a phosphoserine; by CaMK1, CDK3, RPS6KA4 and RPS6KA5 (Ser63). Position 198 is a phosphoserine; by HIPK2 (Ser198). Residues Lys208 and Lys215 each participate in a glycyl lysine isopeptide (Lys-Gly) (interchain with G-Cter in SUMO2) cross-link. The region spanning 213–271 (QLKREIRLMKNREAARECRRKKKEYVKCLENRVAVLENQNKTLIEELKTLKDLYSNKSV) is the bZIP domain. Residues 215–239 (KREIRLMKNREAARECRRKKKEYVK) form a basic motif region. Residues 241–262 (LENRVAVLENQNKTLIEELKTL) form a leucine-zipper region.

This sequence belongs to the bZIP family. ATF subfamily. Binds DNA as a dimer. Interacts with HIPK2 and CDK3. Interacts with MOTS-c, a peptide produced by the mitochondrially encoded 12S rRNA MT-RNR1; the interaction occurs in the nucleus following metabolic stress. Phosphorylated at Ser-198 by HIPK2 in response to genotoxic stress. This phosphorylation promotes transcription repression of FTH1 and other antioxidant detoxification genes. The CDK3-mediated phosphorylation at Ser-63 promotes its transactivation and transcriptional activities. Phosphorylated at Ser-63 by RPS6KA4 and RPS6KA5 in response to mitogenic or stress stimuli.

The protein localises to the nucleus. Its function is as follows. This protein binds the cAMP response element (CRE) (consensus: 5'-GTGACGT[AC][AG]-3'), a sequence present in many viral and cellular promoters. Binds to the Tax-responsive element (TRE) of HTLV-I. Mediates PKA-induced stimulation of CRE-reporter genes. Represses the expression of FTH1 and other antioxidant detoxification genes. Triggers cell proliferation and transformation. This chain is Cyclic AMP-dependent transcription factor ATF-1 (ATF1), found in Homo sapiens (Human).